A 242-amino-acid chain; its full sequence is tRNA pseudouridine synthase A (242 aa).

The active-site Nucleophile is the D51. Y107 contacts substrate.

It belongs to the tRNA pseudouridine synthase TruA family. As to quaternary structure, homodimer.

It catalyses the reaction uridine(38/39/40) in tRNA = pseudouridine(38/39/40) in tRNA. Functionally, formation of pseudouridine at positions 38, 39 and 40 in the anticodon stem and loop of transfer RNAs. This is tRNA pseudouridine synthase A from Helicobacter pylori (strain P12).